The sequence spans 162 residues: MKLNFLVTTVALLVAFPPPYECRAIEGSSNQPATDPDGERQSPPVLARLGEEYFIRLGNRNQNYLRSPADSFPETSQYSKRALQLQLTQRLLEGKVGNIGRLDGNYALRALDSVERERRSEEPPISLDLTFHLLREVLEMARAEQMAQQAHSNRKMMEIFGK.

A signal peptide spans 1 to 24; sequence MKLNFLVTTVALLVAFPPPYECRA. Residues 25-119 constitute a propeptide that is removed on maturation; the sequence is IEGSSNQPAT…ALDSVERERR (95 aa). The residue at position 160 (phenylalanine 160) is a Phenylalanine amide.

The protein belongs to the sauvagine/corticotropin-releasing factor/urotensin I family.

Its subcellular location is the secreted. In terms of biological role, this hormone from hypothalamus regulates the release of corticotropin from pituitary gland. This chain is Corticoliberin (crh), found in Carassius auratus (Goldfish).